We begin with the raw amino-acid sequence, 727 residues long: Centrosomal protein kizuna (727 aa).

Residues 1–20 (MTERSGRGGGTRGASALPSP) are disordered. Residues 77 to 124 (KNARIRNQEYLKQFERIQANITASLEKLQELKIEFETQIKKMQLLSKD) adopt a coiled-coil conformation. Disordered regions lie at residues 176–226 (DFTT…NKSD), 271–456 (EGKK…FTNL), and 564–727 (RLAV…PRTP). Over residues 198–223 (HQQTAQSSDVTGSRVVQTPGDTQCLN) the composition is skewed to polar residues. The segment covering 286-324 (LSPENRTTDLKCDSSRRSEGSEGEILTREHIEVEEERAR) has biased composition (basic and acidic residues). Phosphoserine is present on serine 328. The segment covering 343-359 (PQEKPPARKASSDHLPC) has biased composition (basic and acidic residues). Low complexity predominate over residues 380–390 (LSSSSDLTVSV). Phosphothreonine; by PLK1 is present on threonine 387. Residues 442–455 (APSTPDSPNESFTN) show a composition bias toward polar residues. Residues 569–583 (SSKSSCSLPSTPSDE) show a composition bias toward low complexity. Residues 603 to 613 (QEDESREESTE) are compositionally biased toward acidic residues. Residues 631-642 (LKQSALQGSTHQ) show a composition bias toward polar residues. Composition is skewed to low complexity over residues 659 to 669 (GLKTGSGTFKT) and 677 to 689 (SEAS…GSPL). A phosphoserine mark is found at serine 711, serine 714, and serine 716.

The protein belongs to the kizuna family. As to quaternary structure, interacts with AKAP9, CEP72, ODF2, PCNT and TUBGCP2. In terms of processing, phosphorylation at Thr-387 by PLK1 is not needed for centrosomal localization or pericentriolar material expansion but is indispensable for spindle-pole stabilization.

It is found in the cytoplasm. The protein resides in the cytoskeleton. It localises to the microtubule organizing center. Its subcellular location is the centrosome. The protein localises to the cilium basal body. Centrosomal protein required for establishing a robust mitotic centrosome architecture that can endure the forces that converge on the centrosomes during spindle formation. Required for stabilizing the expanded pericentriolar material around the centriole. This is Centrosomal protein kizuna (KIZ) from Bos taurus (Bovine).